Reading from the N-terminus, the 210-residue chain is Putative O-methyltransferase MSMEG_5073/MSMEI_4947 (210 aa).

Residues V37, E59, 61–62, S67, D85, and V86 contribute to the S-adenosyl-L-methionine site; that span reads GT. Substrate is bound at residue D133. D135 provides a ligand contact to S-adenosyl-L-methionine.

It belongs to the class I-like SAM-binding methyltransferase superfamily. Cation-dependent O-methyltransferase family.

The sequence is that of Putative O-methyltransferase MSMEG_5073/MSMEI_4947 from Mycolicibacterium smegmatis (strain ATCC 700084 / mc(2)155) (Mycobacterium smegmatis).